Here is a 798-residue protein sequence, read N- to C-terminus: PR domain zinc finger protein 4 (798 aa).

In terms of domain architecture, SET spans Lys408–Ser525. 5 consecutive C2H2-type zinc fingers follow at residues Trp586–His608, His614–His636, Tyr642–His664, Leu670–His692, and Ile698–His720. The C2H2-type 6; degenerate zinc finger occupies Tyr726–Ala747. Residues Glu750–Lys798 are disordered. Over residues Gln758–Glu769 the composition is skewed to acidic residues.

It belongs to the class V-like SAM-binding methyltransferase superfamily.

The protein resides in the nucleus. Its function is as follows. May function as a transcription factor involved in cell differentiation. This is PR domain zinc finger protein 4 (Prdm4) from Rattus norvegicus (Rat).